The following is a 528-amino-acid chain: Linear element-associated protein hop1 (528 aa).

Positions 11-212 constitute an HORMA domain; the sequence is TKSDFTLKNL…RGEFKDIVSF (202 aa). The PHD-type zinc finger occupies 334 to 385; sequence LLNCECGDSTEDSEMFQCERCDGWVHCACYGFESDSDPRQPNQLLCYTCLLV. Cysteine 337, cysteine 339, cysteine 351, cysteine 354, histidine 359, cysteine 362, cysteine 379, and cysteine 382 together coordinate Zn(2+). A disordered region spans residues 507–528; sequence RPKKVSKTSNTKETDTMKPLRI. Residues 516–528 are compositionally biased toward basic and acidic residues; that stretch reads NTKETDTMKPLRI.

Interacts (via N-terminus) with rec10; the interaction is direct. Interacts (via C-terminus) with rec15 (via C-terminus); the interaction is direct.

Its subcellular location is the nucleus. The protein localises to the chromosome. Facilitates initiation of meiotic recombination and DNA double-strand break (DSB) formation at DSB hotspot sites by enhancing the interaction between rec10 and rec15. In Schizosaccharomyces pombe (strain 972 / ATCC 24843) (Fission yeast), this protein is Linear element-associated protein hop1.